The chain runs to 347 residues: Monopolin complex subunit LRS4 (347 aa).

Residues 46–118 adopt a coiled-coil conformation; that stretch reads KKVVDETLFL…QISVDKHNKE (73 aa). The span at 112-130 shows a compositional bias: basic and acidic residues; sequence VDKHNKERTPSTGRDEQQR. Disordered regions lie at residues 112–183 and 208–230; these read VDKH…SLLS and RNDT…LQKS. 2 stretches are compositionally biased toward polar residues: residues 131–140 and 155–172; these read NSKAAHTSKP and NNQT…PTSQ. Phosphoserine is present on residues Ser168 and Ser230.

As to quaternary structure, component of the monopolin complex composed of at least CSM1, LRS4 and MAM1. The complex associates with the kinetochore. Phosphorylated by CDC5. This phosphorylation is required for the location to the kinetochores during late pachytene.

It is found in the nucleus. It localises to the nucleolus. The protein localises to the chromosome. The protein resides in the centromere. Its function is as follows. Component of the monopolin complex which promotes monoorientation during meiosis I, required for chromosome segregation during meiosis. Involved in rDNA silencing. The polypeptide is Monopolin complex subunit LRS4 (LRS4) (Saccharomyces cerevisiae (strain ATCC 204508 / S288c) (Baker's yeast)).